The sequence spans 135 residues: Small ribosomal subunit protein bS18 (135 aa).

The tract at residues 1-65 (MARPDMGGPK…GDEGGGRRGF (65 aa)) is disordered. Positions 9–41 (PKMGGGFGGPRSGGFGGGGGGGGFGGGGFGGGR) are enriched in gly residues. A compositionally biased stretch (basic and acidic residues) spans 42 to 61 (GGDRGDRGDRDDRGGDEGGG).

Belongs to the bacterial ribosomal protein bS18 family. In terms of assembly, part of the 30S ribosomal subunit. Forms a tight heterodimer with protein bS6.

In terms of biological role, binds as a heterodimer with protein bS6 to the central domain of the 16S rRNA, where it helps stabilize the platform of the 30S subunit. The chain is Small ribosomal subunit protein bS18 from Anaeromyxobacter dehalogenans (strain 2CP-C).